The primary structure comprises 158 residues: 18.2 kDa class I heat shock protein (158 aa).

In terms of domain architecture, sHSP spans 44 to 158 (ENSAFVSTRV…PEVKTIDISG (115 aa)).

Belongs to the small heat shock protein (HSP20) family. In terms of assembly, forms oligomeric structures.

It localises to the cytoplasm. This chain is 18.2 kDa class I heat shock protein (HSP18.2), found in Medicago sativa (Alfalfa).